The following is a 525-amino-acid chain: G patch domain-containing protein 3 (525 aa).

The disordered stretch occupies residues Y264 to T316. A compositionally biased stretch (acidic residues) spans E275–E298. The span at E299 to T316 shows a compositional bias: basic and acidic residues. A G-patch domain is found at T410–E458.

In terms of assembly, interacts with mitochondrial MAVS; the interaction is markedly increased upon viral infection. As to expression, expressed in ocular tissues including retinal pigment epithelium, cornea, ciliary muscle and non-pigmented ciliary epithelium. Also expressed in optic nerve, cartilage, skin and lymph node.

The protein resides in the nucleus. It is found in the cytoplasm. In terms of biological role, involved in transcriptional regulation. It is able to activate transcription from the CXCR4 promoter and therefore it might control neural crest cell migration involved in ocular and craniofacial development. Is a negative regulator of immune antiviral response, acting via down-regulation of RIG-I-like receptors signaling and inhibition of type I interferon production. The control mechanism involves interaction with mitochondrial MAVS and inhibition of MAVS assembly with downstream proteins implicated in antiviral response, such as TBK1 and TRAF6. This chain is G patch domain-containing protein 3 (GPATCH3), found in Homo sapiens (Human).